Reading from the N-terminus, the 504-residue chain is 13S globulin seed storage protein 2 (504 aa).

The N-terminal stretch at 1–20 (MSTKLILSFSLCLMVLSCSA) is a signal peptide. 2 cysteine pairs are disulfide-bonded: C46-C79 and C122-C320. The Cupin type-1 1 domain maps to 51–265 (LTASEPSRRV…FRDVDRETIS (215 aa)). Disordered stretches follow at residues 128 to 158 (SDSE…GDQH), 214 to 237 (GQSQ…DDEA), and 289 to 314 (QDFE…RSNG). Basic and acidic residues-rich tracts occupy residues 144–158 (RQSE…GDQH) and 218–231 (RETR…QSRE). Positions 326–475 (RNFNTPTNTY…SYDISTKEAY (150 aa)) constitute a Cupin type-1 2 domain.

It belongs to the 11S seed storage protein (globulins) family. In terms of assembly, hexamer; each subunit is composed of an acidic and a basic chain derived from a single precursor and linked by a disulfide bond.

Seed storage protein. The sequence is that of 13S globulin seed storage protein 2 (FA18) from Fagopyrum esculentum (Common buckwheat).